A 291-amino-acid chain; its full sequence is MSGAVATGGAQSAGLGAAAAGCCSSASGAGSAALLSGGSGIAGRLPSRVLEHIFSYLELMDLLNCSLVCWHWNNCLSDENSEVWRSLCARSLSDEAMRSDILCNLASYKGKLKSFQHALSSHDCSRNVYIKKNGFTLHRNPIAQSTDGARGKIGFSEGRHAWEIWWEGPLGTVAVIGIATKRAPMQCQGYVALLGSDDQSWGWNLVDNNLLHNGEVNGNFPQCNNAPKYQIGERIRVILDMDDKTLAFERGFEFLGVAFRGLPKTCLFPAVSAVYGNTEVTMVYLGRPLDG.

Positions 39-87 constitute an F-box domain; it reads SGIAGRLPSRVLEHIFSYLELMDLLNCSLVCWHWNNCLSDENSEVWRSL. Residues 97 to 289 form the B30.2/SPRY domain; the sequence is MRSDILCNLA…VTMVYLGRPL (193 aa).

Belongs to the FBXO45/Fsn family. Probable component of a E3 ubiquitin ligase complex.

The protein operates within protein modification; protein ubiquitination. The chain is F-box/SPRY domain-containing protein 1 (fbxo45) from Danio rerio (Zebrafish).